The chain runs to 416 residues: S-adenosylmethionine synthase (416 aa).

Residue His16 participates in ATP binding. Residue Asp18 participates in Mg(2+) binding. Position 44 (Glu44) interacts with K(+). Residues Glu57 and Gln100 each contribute to the L-methionine site. Residues 100-110 (QSPDIAQGVTQ) are flexible loop. ATP is bound by residues 175–177 (DGK), 251–252 (KF), Asp260, 266–267 (RK), Ala283, and Lys287. Position 260 (Asp260) interacts with L-methionine. Lys291 contributes to the L-methionine binding site.

This sequence belongs to the AdoMet synthase family. Homotetramer; dimer of dimers. Requires Mg(2+) as cofactor. The cofactor is K(+).

It is found in the cytoplasm. It carries out the reaction L-methionine + ATP + H2O = S-adenosyl-L-methionine + phosphate + diphosphate. It participates in amino-acid biosynthesis; S-adenosyl-L-methionine biosynthesis; S-adenosyl-L-methionine from L-methionine: step 1/1. Its function is as follows. Catalyzes the formation of S-adenosylmethionine (AdoMet) from methionine and ATP. The overall synthetic reaction is composed of two sequential steps, AdoMet formation and the subsequent tripolyphosphate hydrolysis which occurs prior to release of AdoMet from the enzyme. The protein is S-adenosylmethionine synthase of Crocosphaera subtropica (strain ATCC 51142 / BH68) (Cyanothece sp. (strain ATCC 51142)).